Here is a 741-residue protein sequence, read N- to C-terminus: Polyribonucleotide nucleotidyltransferase (741 aa).

Mg(2+)-binding residues include D489 and D495. The KH domain maps to 556–615 (PKIDSIQIPVDKIKVVIGKGGETIDKIIAETGVTIDIDEEGLVQIFSSDQDAIDRAKTII). The 69-residue stretch at 625-693 (GEVYTVPVVR…EKGRVDASIK (69 aa)) folds into the S1 motif domain. The disordered stretch occupies residues 696–741 (LPKPEKNEDGENGEEHRHCCCSHHKPDHHSESMEAPKKSDESETKE). Basic and acidic residues-rich tracts occupy residues 698-713 (KPEK…EHRH) and 723-741 (HHSE…ETKE).

It belongs to the polyribonucleotide nucleotidyltransferase family. It depends on Mg(2+) as a cofactor.

It is found in the cytoplasm. The catalysed reaction is RNA(n+1) + phosphate = RNA(n) + a ribonucleoside 5'-diphosphate. Its function is as follows. Involved in mRNA degradation. Catalyzes the phosphorolysis of single-stranded polyribonucleotides processively in the 3'- to 5'-direction. This Streptococcus thermophilus (strain ATCC BAA-491 / LMD-9) protein is Polyribonucleotide nucleotidyltransferase.